A 1020-amino-acid chain; its full sequence is Sodium/potassium-transporting ATPase subunit alpha-2 (1020 aa).

A propeptide spanning residues 1–5 (MGRGA) is cleaved from the precursor. Residues 1–31 (MGRGAGREYSPAATTAENGGGKKKQKEKELD) are disordered. The Cytoplasmic segment spans residues 6–85 (GREYSPAATT…NALTPPPTTP (80 aa)). The residue at position 10 (Ser-10) is a Phosphoserine. The segment at 80–82 (PPP) is interaction with phosphoinositide-3 kinase. A helical membrane pass occupies residues 86-106 (EWVKFCRQLFGGFSILLWIGA). Over 107–129 (LLCFLAYGILAAMEDEPSNDNLY) the chain is Extracellular. The helical transmembrane segment at 130–150 (LGIVLAAVVIVTGCFSYYQEA) threads the bilayer. The Cytoplasmic portion of the chain corresponds to 151 to 286 (KSSKIMDSFK…VGQTPIAMEI (136 aa)). A compositionally biased stretch (polar residues) spans 212 to 227 (DNSSLTGESEPQTRSP). The segment at 212 to 231 (DNSSLTGESEPQTRSPEFTH) is disordered. The chain crosses the membrane as a helical span at residues 287–306 (EHFIQLITGVAVFLGVSFFV). At 307–318 (LSLILGYSWLEA) the chain is on the extracellular side. Residues 319–336 (VIFLIGIIVANVPEGLLA) traverse the membrane as a helical segment. Residues 337 to 769 (TVTVCLTLTA…EEGRLIFDNL (433 aa)) lie on the Cytoplasmic side of the membrane. Asp-374 (4-aspartylphosphate intermediate) is an active-site residue. Phosphoserine occurs at positions 439, 450, 496, and 559. Position 570 is a phosphothreonine (Thr-570). Residues Ser-587 and Ser-672 each carry the phosphoserine modification. Mg(2+) contacts are provided by Asp-714 and Asp-718. Residues 770-789 (KKSIAYTLTSNIPEITPFLL) form a helical membrane-spanning segment. Residues 790–799 (FIIANIPLPL) lie on the Extracellular side of the membrane. Residues 800 to 820 (GTVTILCIDLGTDMVPAISLA) form a helical membrane-spanning segment. Topologically, residues 821–840 (YEAAESDIMKRQPRNSQTDK) are cytoplasmic. Ser-826 is modified (phosphoserine). The chain crosses the membrane as a helical span at residues 841–863 (LVNERLISMAYGQIGMIQALGGF). Residues 864 to 915 (FTYFVILAENGFLPSRLLGIRLDWDDRTTNDLEDSYGQEWTYEQRKVVEFTC) are Extracellular-facing. The chain crosses the membrane as a helical span at residues 916–935 (HTAFFASIVVVQWADLIICK). Over 936-948 (TRRNSVFQQGMKN) the chain is Cytoplasmic. Ser-940 carries the post-translational modification Phosphoserine; by PKA. The helical transmembrane segment at 949-967 (KILIFGLLEETALAAFLSY) threads the bilayer. Over 968–982 (CPGMGVALRMYPLKV) the chain is Extracellular. A helical membrane pass occupies residues 983–1003 (TWWFCAFPYSLLIFIYDEVRK). Over 1004-1020 (LILRRYPGGWVEKETYY) the chain is Cytoplasmic.

Belongs to the cation transport ATPase (P-type) (TC 3.A.3) family. Type IIC subfamily. As to quaternary structure, the sodium/potassium-transporting ATPase is composed of a catalytic alpha subunit, an auxiliary non-catalytic beta subunit and an additional regulatory subunit. Interacts with regulatory subunit FXYD1.

It is found in the membrane. The protein resides in the cell membrane. It carries out the reaction K(+)(out) + Na(+)(in) + ATP + H2O = K(+)(in) + Na(+)(out) + ADP + phosphate + H(+). This is the catalytic component of the active enzyme, which catalyzes the hydrolysis of ATP coupled with the exchange of sodium and potassium ions across the plasma membrane. This action creates the electrochemical gradient of sodium and potassium ions, providing the energy for active transport of various nutrients. In Mus musculus (Mouse), this protein is Sodium/potassium-transporting ATPase subunit alpha-2 (Atp1a2).